Consider the following 136-residue polypeptide: uncharacterized protein (136 aa).

An N-terminal signal peptide occupies residues Met1–Ser35.

This is an uncharacterized protein from Saccharomyces cerevisiae (strain ATCC 204508 / S288c) (Baker's yeast).